We begin with the raw amino-acid sequence, 230 residues long: MVGVKITWLGHSAFLLEAEKKLLIDPFISGNPLAPCSPEELNPDIITVTHGHRDHLGDTIEIGKRTRCRIITIHEVANYIKSKGVFAEGMGKGGTVNVEGIKLTMTDALHSSSIDASGFSFDGGSPAGFIIQINGHSIYHAGDTGVFGDMKLIGELYEPELVLLPIGDKFTMGIKEATKAVELILPRTVIPMHYSTFDVIKQDPEEFKRAVEAKVDTKVIIMKPGESIDL.

The protein belongs to the UPF0173 family.

This chain is UPF0173 metal-dependent hydrolase Mbar_A3716, found in Methanosarcina barkeri (strain Fusaro / DSM 804).